Consider the following 418-residue polypeptide: MDIKDYMQNLGCRARKVSRVLARAGAEEKNQALEMAASFIEKESQALVEANHKDLAAGRSKGLDEALLDRLTLTEARIAVMAEGLRQIASLPDPVGAISELSYRPSGIQVGRMRVPLGVIGIIYESRPNVTADAAGLCLKSGNAVILRGGSEAFHSNQAIACCIHQGLEQAGLPQEAVQVVETTDRLAVGALITQEEHVDVIIPRGGRSLIERISQEAKIPVIKHLDGICHVYIDDRADLDKAVAIAVNAKCQRYGVCNAMETLLVAREIAAEILPMMGEHYCSAGVELRGCPETQGLLPHIEPATEEDWYTEYLAPLLAIRIVAGLDEAIEHITHYGSHHTETIVTEDFTRARRFLTEVDSSSVMVNASTRFADGFEYGLGAEIGISTDKLHARGPVGLEGLTSQKWIVLGNGHIRE.

Belongs to the gamma-glutamyl phosphate reductase family.

The protein resides in the cytoplasm. The catalysed reaction is L-glutamate 5-semialdehyde + phosphate + NADP(+) = L-glutamyl 5-phosphate + NADPH + H(+). It participates in amino-acid biosynthesis; L-proline biosynthesis; L-glutamate 5-semialdehyde from L-glutamate: step 2/2. Functionally, catalyzes the NADPH-dependent reduction of L-glutamate 5-phosphate into L-glutamate 5-semialdehyde and phosphate. The product spontaneously undergoes cyclization to form 1-pyrroline-5-carboxylate. This Nitrosococcus oceani (strain ATCC 19707 / BCRC 17464 / JCM 30415 / NCIMB 11848 / C-107) protein is Gamma-glutamyl phosphate reductase.